A 311-amino-acid chain; its full sequence is Lipoyl synthase (311 aa).

The [4Fe-4S] cluster site is built by C47, C52, C58, C73, C77, C80, and S286. Residues 59 to 276 form the Radical SAM core domain; sequence WSRHTATYLA…RSVGESLGLF (218 aa).

This sequence belongs to the radical SAM superfamily. Lipoyl synthase family. [4Fe-4S] cluster is required as a cofactor.

Its subcellular location is the cytoplasm. It catalyses the reaction [[Fe-S] cluster scaffold protein carrying a second [4Fe-4S](2+) cluster] + N(6)-octanoyl-L-lysyl-[protein] + 2 oxidized [2Fe-2S]-[ferredoxin] + 2 S-adenosyl-L-methionine + 4 H(+) = [[Fe-S] cluster scaffold protein] + N(6)-[(R)-dihydrolipoyl]-L-lysyl-[protein] + 4 Fe(3+) + 2 hydrogen sulfide + 2 5'-deoxyadenosine + 2 L-methionine + 2 reduced [2Fe-2S]-[ferredoxin]. The protein operates within protein modification; protein lipoylation via endogenous pathway; protein N(6)-(lipoyl)lysine from octanoyl-[acyl-carrier-protein]: step 2/2. Catalyzes the radical-mediated insertion of two sulfur atoms into the C-6 and C-8 positions of the octanoyl moiety bound to the lipoyl domains of lipoate-dependent enzymes, thereby converting the octanoylated domains into lipoylated derivatives. This is Lipoyl synthase from Chlamydia trachomatis serovar L2 (strain ATCC VR-902B / DSM 19102 / 434/Bu).